The following is a 105-amino-acid chain: Small ribosomal subunit protein uS10 (105 aa).

The protein belongs to the universal ribosomal protein uS10 family. In terms of assembly, part of the 30S ribosomal subunit.

Its function is as follows. Involved in the binding of tRNA to the ribosomes. This chain is Small ribosomal subunit protein uS10, found in Nostoc punctiforme (strain ATCC 29133 / PCC 73102).